We begin with the raw amino-acid sequence, 304 residues long: MSAFPPPPEPDAPRVAHVEPAPDAVRGILALADRARADDGVAPFNEQTRLTLGADGGPTLLLAHGTDDDPLGAAVVAHGDAGIEAELVVDPAHRRRGVGRALLDAVLAEAAGSPVSVWAHGDHPAARALADATGLDRARELLQLRASVAEARTGLGERQMPAGVALSSFTADDADDWVALNARAFASHPEQGRMTRGDLDDRVAEAWFDPASLLLARDADGRLAGFHWLKVDGGQAEVYVLGVDPDRAARGLGSALLAAGLDLLAERGHDEVDLYVEADNTPALALYRRAAFRDAAVDVQYRRA.

2 consecutive N-acetyltransferase domains span residues 16–155 and 164–304; these read AHVE…RTGL and VALS…YRRA. E46 is a binding site for 1D-myo-inositol 2-(L-cysteinylamino)-2-deoxy-alpha-D-glucopyranoside. Residue 87–89 participates in acetyl-CoA binding; sequence LVV. The 1D-myo-inositol 2-(L-cysteinylamino)-2-deoxy-alpha-D-glucopyranoside site is built by E190, K230, and E237. Residues 241 to 243 and 248 to 254 each bind acetyl-CoA; these read LGV and AARGLGS. Y275 lines the 1D-myo-inositol 2-(L-cysteinylamino)-2-deoxy-alpha-D-glucopyranoside pocket.

Belongs to the acetyltransferase family. MshD subfamily. Monomer.

It catalyses the reaction 1D-myo-inositol 2-(L-cysteinylamino)-2-deoxy-alpha-D-glucopyranoside + acetyl-CoA = mycothiol + CoA + H(+). In terms of biological role, catalyzes the transfer of acetyl from acetyl-CoA to desacetylmycothiol (Cys-GlcN-Ins) to form mycothiol. The polypeptide is Mycothiol acetyltransferase (Clavibacter sepedonicus (Clavibacter michiganensis subsp. sepedonicus)).